The chain runs to 523 residues: Transmembrane protein 266 (523 aa).

Over Met1 to Ser94 the chain is Cytoplasmic. Residues Phe95–Ile115 traverse the membrane as a helical segment. Topologically, residues Lys116 to Ser121 are extracellular. The chain crosses the membrane as a helical span at residues Ser122 to Phe142. The Cytoplasmic portion of the chain corresponds to Ser143–Lys161. The helical transmembrane segment at Ile162–Val182 threads the bilayer. Over Ala183–Asp191 the chain is Extracellular. A helical membrane pass occupies residues Ala192–Val212. The Cytoplasmic segment spans residues Leu213–Ala523. Residues Glu218–Glu270 are a coiled coil. Residues Ser380–Phe477 form a disordered region. Over residues Ser382–Leu397 the composition is skewed to low complexity. A compositionally biased stretch (polar residues) spans Gly398 to Ser411. Over residues Leu421–Ala430 the composition is skewed to pro residues.

As to quaternary structure, homodimer; disulfide-linked. As to expression, mainly expressed in the cerebellum. Also expressed in cerebral cortex, skeletal muscle and thyroid, but at much lower levels.

It localises to the cell membrane. Its subcellular location is the cell projection. It is found in the dendrite. The protein localises to the perikaryon. In terms of biological role, voltage-sensor protein present on the post-synaptic side of glutamatergic mossy fibers and granule cells in the cerebellum. Despite the presence of a voltage-sensor segment, does not form a functional ion channel and its precise role remains unclear. Undergoes both rapid and slow structural rearrangements in response to changes in voltage. Contains a zinc-binding site that can regulate the slow conformational transition. The chain is Transmembrane protein 266 from Homo sapiens (Human).